The following is a 196-amino-acid chain: Peptide methionine sulfoxide reductase MsrA 2 (196 aa).

Residue Cys-36 is part of the active site.

The protein belongs to the MsrA Met sulfoxide reductase family.

It catalyses the reaction L-methionyl-[protein] + [thioredoxin]-disulfide + H2O = L-methionyl-(S)-S-oxide-[protein] + [thioredoxin]-dithiol. The catalysed reaction is [thioredoxin]-disulfide + L-methionine + H2O = L-methionine (S)-S-oxide + [thioredoxin]-dithiol. Has an important function as a repair enzyme for proteins that have been inactivated by oxidation. Catalyzes the reversible oxidation-reduction of methionine sulfoxide in proteins to methionine. The protein is Peptide methionine sulfoxide reductase MsrA 2 (msrA2) of Caulobacter vibrioides (strain ATCC 19089 / CIP 103742 / CB 15) (Caulobacter crescentus).